We begin with the raw amino-acid sequence, 418 residues long: Probable serine hydroxymethyltransferase (418 aa).

(6S)-5,6,7,8-tetrahydrofolate contacts are provided by residues L118 and 122-124 (GHL). An N6-(pyridoxal phosphate)lysine modification is found at K226. (6S)-5,6,7,8-tetrahydrofolate is bound at residue 351–353 (SPF).

Belongs to the SHMT family. In terms of assembly, homodimer. Pyridoxal 5'-phosphate serves as cofactor.

Its subcellular location is the cytoplasm. It carries out the reaction (6R)-5,10-methylene-5,6,7,8-tetrahydrofolate + glycine + H2O = (6S)-5,6,7,8-tetrahydrofolate + L-serine. It participates in one-carbon metabolism; tetrahydrofolate interconversion. Catalyzes the reversible interconversion of serine and glycine with tetrahydrofolate (THF) serving as the one-carbon carrier. This reaction serves as the major source of one-carbon groups required for the biosynthesis of purines, thymidylate, methionine, and other important biomolecules. This Mesomycoplasma hyopneumoniae (strain J / ATCC 25934 / NCTC 10110) (Mycoplasma hyopneumoniae) protein is Probable serine hydroxymethyltransferase.